The following is an 81-amino-acid chain: Cytochrome b559 subunit alpha (81 aa).

Residues 21–35 traverse the membrane as a helical segment; sequence VIHSITIPMLFIAGW. Histidine 23 contacts heme.

The protein belongs to the PsbE/PsbF family. Heterodimer of an alpha subunit and a beta subunit. PSII is composed of 1 copy each of membrane proteins PsbA, PsbB, PsbC, PsbD, PsbE, PsbF, PsbH, PsbI, PsbJ, PsbK, PsbL, PsbM, PsbT, PsbX, PsbY, PsbZ, Psb30/Ycf12, peripheral proteins PsbO, CyanoQ (PsbQ), PsbU, PsbV and a large number of cofactors. It forms dimeric complexes. Heme b is required as a cofactor.

The protein localises to the cellular thylakoid membrane. In terms of biological role, this b-type cytochrome is tightly associated with the reaction center of photosystem II (PSII). PSII is a light-driven water:plastoquinone oxidoreductase that uses light energy to abstract electrons from H(2)O, generating O(2) and a proton gradient subsequently used for ATP formation. It consists of a core antenna complex that captures photons, and an electron transfer chain that converts photonic excitation into a charge separation. In Picosynechococcus sp. (strain ATCC 27264 / PCC 7002 / PR-6) (Agmenellum quadruplicatum), this protein is Cytochrome b559 subunit alpha.